The following is a 433-amino-acid chain: tRNA(Ile)-lysidine synthase (433 aa).

37–42 (SGGKDS) provides a ligand contact to ATP.

This sequence belongs to the tRNA(Ile)-lysidine synthase family.

The protein localises to the cytoplasm. It catalyses the reaction cytidine(34) in tRNA(Ile2) + L-lysine + ATP = lysidine(34) in tRNA(Ile2) + AMP + diphosphate + H(+). In terms of biological role, ligates lysine onto the cytidine present at position 34 of the AUA codon-specific tRNA(Ile) that contains the anticodon CAU, in an ATP-dependent manner. Cytidine is converted to lysidine, thus changing the amino acid specificity of the tRNA from methionine to isoleucine. The protein is tRNA(Ile)-lysidine synthase of Leptospira interrogans serogroup Icterohaemorrhagiae serovar Lai (strain 56601).